The primary structure comprises 245 residues: Probable phosphatase YcdX (245 aa).

Zn(2+) contacts are provided by His7, His9, His15, His40, Glu73, His101, His131, Asp192, and His194.

Belongs to the PHP family. In terms of assembly, homotrimer. Zn(2+) serves as cofactor.

The polypeptide is Probable phosphatase YcdX (Escherichia coli (strain K12 / MC4100 / BW2952)).